The following is a 606-amino-acid chain: 4-hydroxy-3-methylbut-2-en-1-yl diphosphate synthase (flavodoxin) (606 aa).

4 residues coordinate [4Fe-4S] cluster: cysteine 513, cysteine 516, cysteine 547, and glutamate 554.

This sequence belongs to the IspG family. [4Fe-4S] cluster is required as a cofactor.

It carries out the reaction (2E)-4-hydroxy-3-methylbut-2-enyl diphosphate + oxidized [flavodoxin] + H2O + 2 H(+) = 2-C-methyl-D-erythritol 2,4-cyclic diphosphate + reduced [flavodoxin]. It functions in the pathway isoprenoid biosynthesis; isopentenyl diphosphate biosynthesis via DXP pathway; isopentenyl diphosphate from 1-deoxy-D-xylulose 5-phosphate: step 5/6. Functionally, converts 2C-methyl-D-erythritol 2,4-cyclodiphosphate (ME-2,4cPP) into 1-hydroxy-2-methyl-2-(E)-butenyl 4-diphosphate. The chain is 4-hydroxy-3-methylbut-2-en-1-yl diphosphate synthase (flavodoxin) from Chlamydia felis (strain Fe/C-56) (Chlamydophila felis).